A 145-amino-acid polypeptide reads, in one-letter code: Large ribosomal subunit protein bL17 (145 aa).

This sequence belongs to the bacterial ribosomal protein bL17 family. Part of the 50S ribosomal subunit. Contacts protein L32.

In Francisella tularensis subsp. tularensis (strain FSC 198), this protein is Large ribosomal subunit protein bL17.